Here is a 93-residue protein sequence, read N- to C-terminus: MAQLLGDAEIQSQASKLSGWTLEGSKLQTTRKFKDFIEAIAFVNKLVEPAESAGHHPDIEISYNKVKVTLTTHDAGGLTQKDFDVAATISQIN.

Belongs to the pterin-4-alpha-carbinolamine dehydratase family.

The catalysed reaction is (4aS,6R)-4a-hydroxy-L-erythro-5,6,7,8-tetrahydrobiopterin = (6R)-L-erythro-6,7-dihydrobiopterin + H2O. The protein is Putative pterin-4-alpha-carbinolamine dehydratase of Trichormus variabilis (strain ATCC 29413 / PCC 7937) (Anabaena variabilis).